The following is a 395-amino-acid chain: Crh-like protein 5 (395 aa).

A signal peptide spans 1–19 (MYFKYTAAALAAVLPLCSA). A disulfide bridge links Cys-25 with Cys-32. One can recognise a GH16 domain in the interval 45 to 230 (ADFTSASALD…WAGGLTDYSA (186 aa)). Residue Glu-119 is the Nucleophile of the active site. Glu-123 serves as the catalytic Proton donor. Chitin-binding residues include Glu-123, Arg-203, Trp-207, and Thr-218. Residues 271–374 (ISSSSSVTSS…PELSQGAAGS (104 aa)) are disordered. Composition is skewed to low complexity over residues 272–338 (SSSS…SNTG) and 348–364 (GSSS…ASAT). An N-linked (GlcNAc...) asparagine glycan is attached at Asn-319. Gly-370 carries the GPI-like-anchor amidated glycine lipid modification. A propeptide spans 371 to 395 (AAGSIKGSVTACALVFGAVAAVLAF) (removed in mature form).

The protein belongs to the glycosyl hydrolase 16 family. CRH1 subfamily. In terms of processing, the GPI-like anchor contains a phosphoceramide lipid group. The anchor position has not been determined.

Its subcellular location is the cell membrane. It localises to the secreted. The protein resides in the cell wall. It carries out the reaction Random endo-hydrolysis of N-acetyl-beta-D-glucosaminide (1-&gt;4)-beta-linkages in chitin and chitodextrins.. Functionally, dual chitinase/transglycosylase that plays a role in cell wall architecture. Chitinase and transglycosylase activities are coupled. Required for the polysaccharide cross-linking at the septa and the cell wall. More specifically, transfers chitin to 1,6-beta-glucan in the cell wall. Chr5 shows acceptor substrate promiscuity and is also able to cross-link chitin to chitin. This chain is Crh-like protein 5, found in Aspergillus fumigatus (strain ATCC MYA-4609 / CBS 101355 / FGSC A1100 / Af293) (Neosartorya fumigata).